Here is a 282-residue protein sequence, read N- to C-terminus: Bifunctional protein FolD (282 aa).

NADP(+) contacts are provided by residues 166–168 (GAS) and I232.

Belongs to the tetrahydrofolate dehydrogenase/cyclohydrolase family. Homodimer.

It catalyses the reaction (6R)-5,10-methylene-5,6,7,8-tetrahydrofolate + NADP(+) = (6R)-5,10-methenyltetrahydrofolate + NADPH. It carries out the reaction (6R)-5,10-methenyltetrahydrofolate + H2O = (6R)-10-formyltetrahydrofolate + H(+). Its pathway is one-carbon metabolism; tetrahydrofolate interconversion. Functionally, catalyzes the oxidation of 5,10-methylenetetrahydrofolate to 5,10-methenyltetrahydrofolate and then the hydrolysis of 5,10-methenyltetrahydrofolate to 10-formyltetrahydrofolate. The chain is Bifunctional protein FolD from Histophilus somni (strain 129Pt) (Haemophilus somnus).